A 212-amino-acid polypeptide reads, in one-letter code: uncharacterized protein (212 aa).

This is an uncharacterized protein from Rickettsia prowazekii (strain Madrid E).